Consider the following 255-residue polypeptide: Fe(3+) dicitrate transport ATP-binding protein FecE (255 aa).

The ABC transporter domain maps to 3 to 238 (LRTENLTVSY…GLLRTVFSVE (236 aa)). 35 to 42 (GPNGCGKS) is an ATP binding site.

Belongs to the ABC transporter superfamily. The complex is composed of two ATP-binding proteins (FecE), two transmembrane proteins (FecC and FecD) and a solute-binding protein (FecB).

It is found in the cell inner membrane. The enzyme catalyses iron(III) dicitrate(out) + ATP + H2O = iron(III) dicitrate(in) + ADP + phosphate + H(+). Part of the ABC transporter complex FecBCDE involved in citrate-dependent Fe(3+) uptake. Binds ATP. Probably responsible for energy coupling to the transport system. This Escherichia coli (strain K12) protein is Fe(3+) dicitrate transport ATP-binding protein FecE.